The primary structure comprises 494 residues: UDP-glucose 6-dehydrogenase (494 aa).

NAD(+)-binding positions include 11–16 (GAGYVG), Asp36, Arg41, and 89–93 (VNTPT). Residues 88 to 110 (SVNTPTKTYGMGKGRAADLKYIE) form a disordered region. Lys107 is subject to N6-acetyllysine. Residues 129–135 (KSTVPVR) are allosteric switch region. Residue 130–132 (STV) participates in NAD(+) binding. The active-site Proton donor/acceptor is Glu161. Substrate is bound by residues 161-165 (EFLAE), 220-224 (KLAAN), Arg260, and 267-273 (KASVGFG). Glu165 is a binding site for NAD(+). Lys220 (proton donor/acceptor) is an active-site residue. Residue Cys276 is the Nucleophile of the active site. 276 to 279 (CFQK) serves as a coordination point for NAD(+). The important for formation of active hexamer structure stretch occupies residues 321–325 (SLFNT). Residue 338–339 (FK) coordinates substrate. Arg346 provides a ligand contact to NAD(+). A substrate-binding site is contributed by Arg442. The interval 466 to 494 (VSSKRIPYAPSGEIPKFSLQDPPNKKPKV) is disordered. Ser476 carries the phosphoserine modification.

The protein belongs to the UDP-glucose/GDP-mannose dehydrogenase family. In terms of assembly, homohexamer.

It carries out the reaction UDP-alpha-D-glucose + 2 NAD(+) + H2O = UDP-alpha-D-glucuronate + 2 NADH + 3 H(+). It functions in the pathway nucleotide-sugar biosynthesis; UDP-alpha-D-glucuronate biosynthesis; UDP-alpha-D-glucuronate from UDP-alpha-D-glucose: step 1/1. With respect to regulation, UDP-alpha-D-xylose (UDX) acts as a feedback inhibitor. It binds at the same site as the substrate, but functions as allosteric inhibitor by triggering a conformation change that disrupts the active hexameric ring structure and gives rise to an inactive, horseshoe-shaped hexamer. In terms of biological role, catalyzes the formation of UDP-alpha-D-glucuronate, a constituent of complex glycosaminoglycans. Required for the biosynthesis of chondroitin sulfate and heparan sulfate. Required for embryonic development via its role in the biosynthesis of glycosaminoglycans. Required for proper brain and neuronal development. The sequence is that of UDP-glucose 6-dehydrogenase (UGDH) from Pongo abelii (Sumatran orangutan).